The primary structure comprises 126 residues: Protein ApaG (126 aa).

The 125-residue stretch at 2–126 folds into the ApaG domain; that stretch reads SDPRYQIDVS…FRLAVPGALH (125 aa).

The polypeptide is Protein ApaG (Ectopseudomonas mendocina (strain ymp) (Pseudomonas mendocina)).